Consider the following 469-residue polypeptide: Glutamate--tRNA ligase 1 (469 aa).

The 'HIGH' region motif lies at 10 to 20 (PSPTGYLHIGG). Zn(2+) is bound by residues Cys99, Cys101, Cys126, and Asp128. The 'KMSKS' region signature appears at 237–241 (RLSKR). Lys240 lines the ATP pocket.

This sequence belongs to the class-I aminoacyl-tRNA synthetase family. Glutamate--tRNA ligase type 1 subfamily. In terms of assembly, monomer. It depends on Zn(2+) as a cofactor.

The protein resides in the cytoplasm. The catalysed reaction is tRNA(Glu) + L-glutamate + ATP = L-glutamyl-tRNA(Glu) + AMP + diphosphate. Catalyzes the attachment of glutamate to tRNA(Glu) in a two-step reaction: glutamate is first activated by ATP to form Glu-AMP and then transferred to the acceptor end of tRNA(Glu). The sequence is that of Glutamate--tRNA ligase 1 from Coxiella burnetii (strain CbuK_Q154) (Coxiella burnetii (strain Q154)).